We begin with the raw amino-acid sequence, 465 residues long: UDP-glycosyltransferase 89A2 (465 aa).

UDP-alpha-D-glucose-binding positions include Ser291, 342–344 (VSQ), 359–367 (HCGWNSVLE), and 381–384 (EADQ).

It belongs to the UDP-glycosyltransferase family.

In terms of biological role, glucosyltransferase that glucosylates benzoates and benzoate derivatives in vitro. This Arabidopsis thaliana (Mouse-ear cress) protein is UDP-glycosyltransferase 89A2 (UGT89A2).